The sequence spans 487 residues: Solute carrier family 22 member 15-like (487 aa).

Residues 22 to 42 (AFLTLLQVYVACQSMLIVLVG) traverse the membrane as a helical segment. An N-linked (GlcNAc...) asparagine glycan is attached at asparagine 70. 11 helical membrane-spanning segments follow: residues 90–110 (LASS…GPLS), 117–137 (PVYL…ALAP), 141–161 (VFAV…LVSF), 178–198 (SLTN…GFYI), 203–223 (TLAF…FLLP), 286–306 (ILLM…TLNA), 315–335 (LNVA…LYFI), 345–365 (ATAG…FLPE), 374–394 (TVLA…VYIY), 406–426 (AGLG…PFIP), and 435–455 (MPFV…LLLP).

It belongs to the major facilitator (TC 2.A.1) superfamily. Organic cation transporter (TC 2.A.1.19) family.

The protein localises to the membrane. Probably transports organic cations. The chain is Solute carrier family 22 member 15-like (slc22a15b) from Xenopus tropicalis (Western clawed frog).